Consider the following 489-residue polypeptide: 3-octaprenyl-4-hydroxybenzoate carboxy-lyase (489 aa).

Mn(2+) is bound at residue N172. Prenylated FMN contacts are provided by residues 175–177 (IYR), 189–191 (RWL), and 194–195 (RG). A Mn(2+)-binding site is contributed by E238. Residue D287 is the Proton donor of the active site.

Belongs to the UbiD family. In terms of assembly, homohexamer. It depends on prenylated FMN as a cofactor. Mn(2+) serves as cofactor.

Its subcellular location is the cell membrane. The enzyme catalyses a 4-hydroxy-3-(all-trans-polyprenyl)benzoate + H(+) = a 2-(all-trans-polyprenyl)phenol + CO2. Its pathway is cofactor biosynthesis; ubiquinone biosynthesis. Its function is as follows. Catalyzes the decarboxylation of 3-octaprenyl-4-hydroxy benzoate to 2-octaprenylphenol, an intermediate step in ubiquinone biosynthesis. This chain is 3-octaprenyl-4-hydroxybenzoate carboxy-lyase, found in Salmonella arizonae (strain ATCC BAA-731 / CDC346-86 / RSK2980).